Consider the following 448-residue polypeptide: Homogentisate 1,2-dioxygenase (448 aa).

Catalysis depends on His303, which acts as the Proton acceptor. Fe cation contacts are provided by His346 and Glu352. Homogentisate contacts are provided by Tyr361 and His382. His382 lines the Fe cation pocket.

This sequence belongs to the homogentisate dioxygenase family. Hexamer; dimer of trimers. Fe cation serves as cofactor.

The enzyme catalyses homogentisate + O2 = 4-maleylacetoacetate + H(+). The protein operates within amino-acid degradation; L-phenylalanine degradation; acetoacetate and fumarate from L-phenylalanine: step 4/6. Functionally, involved in the catabolism of homogentisate (2,5-dihydroxyphenylacetate or 2,5-OH-PhAc), a central intermediate in the degradation of phenylalanine and tyrosine. Catalyzes the oxidative ring cleavage of the aromatic ring of homogentisate to yield maleylacetoacetate. The sequence is that of Homogentisate 1,2-dioxygenase from Rhodopseudomonas palustris (strain BisB18).